A 309-amino-acid chain; its full sequence is Mitochondrial import receptor subunit TOM34 (309 aa).

Residue Ser8 is modified to Phosphoserine. TPR repeat units lie at residues 9-42, 51-84, and 85-118; these read VEQL…LQAR, SVLY…VPFS, and IKPL…DNSV. Residues 158-189 form a disordered region; that stretch reads WNSLPSDNHKETAKTKSKEATATKSRVPSAGD. Residue Ser160 is modified to Phosphoserine. The segment covering 164-178 has biased composition (basic and acidic residues); that stretch reads DNHKETAKTKSKEAT. Position 186 is a phosphoserine (Ser186). TPR repeat units lie at residues 193–226, 227–260, and 261–294; these read AKAL…SSLE, SATY…DGKN, and VKAF…EPRN. Lys197 is covalently cross-linked (Glycyl lysine isopeptide (Lys-Gly) (interchain with G-Cter in SUMO2)).

The protein belongs to the Tom34 family. Interacts with HSP90A, VCP, ATP6V1D, KIAA0665, AMPK, and DMAP1 through its TPR repeat. As to expression, isoform 1 is ubiquitously expressed while isoform 2 is expressed only in mature testicular germ cells. Isoform 1 is expressed in all testicular cells. Isoform 2 is highly expressed in early to late pachytene cells but expression is significantly decreased in round spermatid cells.

The protein localises to the cytoplasm. Its subcellular location is the mitochondrion outer membrane. Its function is as follows. Plays a role in the import of cytosolically synthesized preproteins into mitochondria. Binds the mature portion of precursor proteins. Interacts with cellular components, and possesses weak ATPase activity. May be a chaperone-like protein that helps to keep newly synthesized precursors in an unfolded import compatible state. The sequence is that of Mitochondrial import receptor subunit TOM34 (Tomm34) from Mus musculus (Mouse).